A 102-amino-acid polypeptide reads, in one-letter code: Complement inhibitor RaCI3 (102 aa).

The signal sequence occupies residues 1 to 24; sequence MAALNGLVLLLLTISAMFISECYS. 3 disulfides stabilise this stretch: C37-C61, C42-C63, and C57-C78.

This sequence belongs to the RaCI family. As to expression, expressed in salivary glands.

Its subcellular location is the secreted. Complement inhibitor. Prevents complement-mediated C5 activation by binding to C5. Binds C5 at a different binding site than the other tick complement inhibitors OmCI and CirpT1, and the drug eculizumab. Inhibits complement in human and guinea pig but not in other species tested (rabbit, rat, mouse, and pig). The polypeptide is Complement inhibitor RaCI3 (Dermacentor andersoni (Rocky mountain wood tick)).